The chain runs to 862 residues: Aldehyde-alcohol dehydrogenase (862 aa).

The active site involves Cys-244. 420–425 (GFWGGN) is an NAD(+) binding site.

The protein in the N-terminal section; belongs to the aldehyde dehydrogenase family. In the C-terminal section; belongs to the iron-containing alcohol dehydrogenase family.

It catalyses the reaction a primary alcohol + NAD(+) = an aldehyde + NADH + H(+). It carries out the reaction a secondary alcohol + NAD(+) = a ketone + NADH + H(+). The catalysed reaction is an aldehyde + NAD(+) + H2O = a carboxylate + NADH + 2 H(+). Its function is as follows. Has both aldehyde and alcohol dehydrogenase activities. Can use acetaldehyde, butyraldehyde, butanol and ethanol. This is Aldehyde-alcohol dehydrogenase from Clostridium acetobutylicum (strain ATCC 824 / DSM 792 / JCM 1419 / IAM 19013 / LMG 5710 / NBRC 13948 / NRRL B-527 / VKM B-1787 / 2291 / W).